The sequence spans 486 residues: Regulatory protein ViaA (486 aa).

It belongs to the ViaA family. As to quaternary structure, homodimer. Interacts with RavA.

It is found in the cytoplasm. Functionally, component of the RavA-ViaA chaperone complex, which may act on the membrane to optimize the function of some of the respiratory chains. ViaA stimulates the ATPase activity of RavA. This chain is Regulatory protein ViaA, found in Erwinia tasmaniensis (strain DSM 17950 / CFBP 7177 / CIP 109463 / NCPPB 4357 / Et1/99).